The primary structure comprises 145 residues: Transcription antitermination protein NusB (145 aa).

The protein belongs to the NusB family.

In terms of biological role, involved in transcription antitermination. Required for transcription of ribosomal RNA (rRNA) genes. Binds specifically to the boxA antiterminator sequence of the ribosomal RNA (rrn) operons. The protein is Transcription antitermination protein NusB of Geotalea uraniireducens (strain Rf4) (Geobacter uraniireducens).